Reading from the N-terminus, the 346-residue chain is Phosphate acyltransferase (346 aa).

This sequence belongs to the PlsX family. In terms of assembly, homodimer. Probably interacts with PlsY.

It localises to the cytoplasm. It catalyses the reaction a fatty acyl-[ACP] + phosphate = an acyl phosphate + holo-[ACP]. It participates in lipid metabolism; phospholipid metabolism. Its function is as follows. Catalyzes the reversible formation of acyl-phosphate (acyl-PO(4)) from acyl-[acyl-carrier-protein] (acyl-ACP). This enzyme utilizes acyl-ACP as fatty acyl donor, but not acyl-CoA. This Deinococcus geothermalis (strain DSM 11300 / CIP 105573 / AG-3a) protein is Phosphate acyltransferase.